The sequence spans 206 residues: Urease accessory protein UreG (206 aa).

12–19 (GPVGSGKT) serves as a coordination point for GTP.

It belongs to the SIMIBI class G3E GTPase family. UreG subfamily. In terms of assembly, homodimer. UreD, UreF and UreG form a complex that acts as a GTP-hydrolysis-dependent molecular chaperone, activating the urease apoprotein by helping to assemble the nickel containing metallocenter of UreC. The UreE protein probably delivers the nickel.

It is found in the cytoplasm. In terms of biological role, facilitates the functional incorporation of the urease nickel metallocenter. This process requires GTP hydrolysis, probably effectuated by UreG. The chain is Urease accessory protein UreG from Synechocystis sp. (strain ATCC 27184 / PCC 6803 / Kazusa).